The following is a 720-amino-acid chain: MGNSYSTSQQEYYITGSSNQLTPTTTTRAHSSGTLKAVAELPIGMNPSKVEIDSISYTDFLIDDIFDEEHDGLVDWIGRMVQKNSRIKGVVHITDKVISYVSKAAQFAKSFIGANKLAPDLEVSDCIDSLEAFAKAFSMFVQTHAPRDTSDAKYHGHDYGDPIDSYFDDINETYTKWASDSRGKLITGATIDVSAGALIPLLIAASQIIALSSKIGLKGQADIFGSTIECNSYHVLPGQTQLARIGKILKANESLQPRVIDTIKAHGHNLGLMTNVKGHDHHSYFSAPTLVSDIVENGPLKGIHPMKIIRHRANIVMQNRHNYSCDLLTLPLDNWNINTAPWMLRHFETEAMTIFDVRPVPSKLIQYTTASIFPTATKATIPGVAGAGATLITVYPTIYSLPPFFSKFNGNIIHRYSYIISYVREETYVFNINDVYAGVVVSRSDIDSLFITGKCVVFSAPRTSQNLTIHTIRVSGVVSFHDFKPIVPSTTNVSEILFEKQHGFVPAFIVKDSSLTPTSDASAAISIVGSHTYFHLSSGSLPINDYTVNPSDGSSTKVKNFLDAIALLPFSEMALPFSIDTLWREYSSGVVAYLDMTIFNDEFFHNSHPIICLSVIDYLKTNTSGFYYYNDLLQPAWYIPSNVRRVLRYMYAGIRLWLINDKRQNPLLGLTFKGDNARTLKYFVGLLVSCAHGLSMEYPTMDSEYDGRKQWTQIASLAVG.

Glycine 2 carries the N-myristoyl glycine; by host lipid modification.

This is an uncharacterized protein from Cryphonectria parasitica mycoreovirus 1 (strain 9B21) (CpMYRV-1).